A 65-amino-acid polypeptide reads, in one-letter code: Conotoxin Cal1.3 (65 aa).

The N-terminal stretch at Met1–Ala18 is a signal peptide. Positions Val19–Leu49 are excised as a propeptide. Cystine bridges form between Cys52–Cys62 and Cys53–Cys59. Pro61 is subject to 4-hydroxyproline. The residue at position 62 (Cys62) is a Cysteine amide.

It belongs to the conotoxin T superfamily. In terms of tissue distribution, expressed by the venom duct.

The protein resides in the secreted. Its function is as follows. Probable neurotoxin with unknown target. Possibly targets ion channels. This Californiconus californicus (California cone) protein is Conotoxin Cal1.3.